A 412-amino-acid polypeptide reads, in one-letter code: Aspartokinase (412 aa).

2 consecutive ACT domains span residues 266–340 (LTIR…GDTN) and 346–412 (IVGV…RQGE).

Belongs to the aspartokinase family.

It catalyses the reaction L-aspartate + ATP = 4-phospho-L-aspartate + ADP. Its pathway is amino-acid biosynthesis; L-lysine biosynthesis via DAP pathway; (S)-tetrahydrodipicolinate from L-aspartate: step 1/4. The protein operates within amino-acid biosynthesis; L-methionine biosynthesis via de novo pathway; L-homoserine from L-aspartate: step 1/3. It functions in the pathway amino-acid biosynthesis; L-threonine biosynthesis; L-threonine from L-aspartate: step 1/5. The polypeptide is Aspartokinase (lysC) (Pseudomonas aeruginosa (strain ATCC 15692 / DSM 22644 / CIP 104116 / JCM 14847 / LMG 12228 / 1C / PRS 101 / PAO1)).